The chain runs to 32 residues: Cytochrome b6-f complex subunit 7 (32 aa).

Residues 9 to 27 (AAVFWILIPIGLVGGALLL) traverse the membrane as a helical segment.

Belongs to the PetM family. The 4 large subunits of the cytochrome b6-f complex are cytochrome b6, subunit IV (17 kDa polypeptide, PetD), cytochrome f and the Rieske protein, while the 4 small subunits are PetG, PetL, PetM and PetN. The complex functions as a dimer.

It localises to the cellular thylakoid membrane. Its function is as follows. Component of the cytochrome b6-f complex, which mediates electron transfer between photosystem II (PSII) and photosystem I (PSI), cyclic electron flow around PSI, and state transitions. This is Cytochrome b6-f complex subunit 7 from Prochlorococcus marinus (strain MIT 9515).